Reading from the N-terminus, the 106-residue chain is ATP-dependent Clp protease adapter protein ClpS (106 aa).

It belongs to the ClpS family. As to quaternary structure, binds to the N-terminal domain of the chaperone ClpA.

Its function is as follows. Involved in the modulation of the specificity of the ClpAP-mediated ATP-dependent protein degradation. The chain is ATP-dependent Clp protease adapter protein ClpS from Methylococcus capsulatus (strain ATCC 33009 / NCIMB 11132 / Bath).